The primary structure comprises 707 residues: 65-kDa microtubule-associated protein 3 (707 aa).

5 coiled-coil regions span residues 49-84 (LEVY…CSAM), 157-179 (NLSM…EKID), 269-289 (QQEY…ITEA), 354-374 (IVDA…IKEE), and 464-486 (LEEY…DQKK). The segment at 495–574 (QEALYGSKPS…PSRKQSMNPS (80 aa)) is disordered. Over residues 500-512 (GSKPSPSKPLGGK) the composition is skewed to low complexity. Phosphoserine is present on residues Ser-504 and Ser-528.

The protein belongs to the MAP65/ASE1 family. As to quaternary structure, forms a dimer. Binds to microtubules (MT) during cell division. Bundles polymerized MT via the formation of 25-nm crossbridges with centrally located endocytic MT, and midline phragmoplast MT. Expressed in all tissues enriched in dividing cells, such as the root and shoot apical meristem, foliar primordia, and young leaves, and embryos.

The protein localises to the nucleus. It is found in the cytoplasm. The protein resides in the cytoskeleton. It localises to the phragmoplast. In terms of biological role, microtubule-associated protein that plays a critical role in organizing the mitotic microtubule array during both early and late mitosis in all plant organs. Essential for the cytokinesis, especially in roots, by maintaining the integrity of the overlapped microtubules in the phragmoplast. Required during root morphogenesis. Needed for giant cell development during root knot nematode infection, where cytokinesis is initiated but not completed. The chain is 65-kDa microtubule-associated protein 3 (MAP65-3) from Arabidopsis thaliana (Mouse-ear cress).